The chain runs to 361 residues: Ribosomal RNA large subunit methyltransferase M (361 aa).

Residues Ser187, 220 to 223 (CPGG), Asp239, Asp259, and Asp276 contribute to the S-adenosyl-L-methionine site. Catalysis depends on Lys305, which acts as the Proton acceptor.

The protein belongs to the class I-like SAM-binding methyltransferase superfamily. RNA methyltransferase RlmE family. RlmM subfamily. As to quaternary structure, monomer.

It is found in the cytoplasm. The catalysed reaction is cytidine(2498) in 23S rRNA + S-adenosyl-L-methionine = 2'-O-methylcytidine(2498) in 23S rRNA + S-adenosyl-L-homocysteine + H(+). Functionally, catalyzes the 2'-O-methylation at nucleotide C2498 in 23S rRNA. This chain is Ribosomal RNA large subunit methyltransferase M, found in Shewanella baltica (strain OS223).